Here is a 259-residue protein sequence, read N- to C-terminus: Glutamate racemase (259 aa).

Substrate is bound by residues 7–8 (DS) and 39–40 (YG). The active-site Proton donor/acceptor is the Cys70. A substrate-binding site is contributed by 71–72 (NT). The active-site Proton donor/acceptor is Cys180. 181–182 (TH) provides a ligand contact to substrate.

It belongs to the aspartate/glutamate racemases family.

The catalysed reaction is L-glutamate = D-glutamate. Its pathway is cell wall biogenesis; peptidoglycan biosynthesis. Provides the (R)-glutamate required for cell wall biosynthesis. This chain is Glutamate racemase, found in Persephonella marina (strain DSM 14350 / EX-H1).